A 130-amino-acid polypeptide reads, in one-letter code: Lysozyme C (130 aa).

The 129-residue stretch at 2 to 130 folds into the C-type lysozyme domain; sequence KVYGRCELAA…VNVWIRGCRL (129 aa). Intrachain disulfides connect C7–C128, C31–C116, C65–C81, and C77–C95. Residues E36 and D53 contribute to the active site.

The protein belongs to the glycosyl hydrolase 22 family. As to quaternary structure, monomer.

The protein resides in the secreted. The catalysed reaction is Hydrolysis of (1-&gt;4)-beta-linkages between N-acetylmuramic acid and N-acetyl-D-glucosamine residues in a peptidoglycan and between N-acetyl-D-glucosamine residues in chitodextrins.. Lysozymes have primarily a bacteriolytic function; those in tissues and body fluids are associated with the monocyte-macrophage system and enhance the activity of immunoagents. The sequence is that of Lysozyme C (LYZ) from Phasianus versicolor (Green pheasant).